A 209-amino-acid chain; its full sequence is MSQVDINHARALVYQLLSSLFAREVDEQRLKELTSEAAQQFWEQLSLEANFTQSVDKIRSTLNGIKDDEALLELAADYCGLFLVGTKHSASPYASLYLSGEDEPLLFGEQHQQMSEFLHQSKLQVQSHFPEPADHLAVMLAYMAHLCCHSEDSVQLSFLQTCVDSWLAKFINQLTQCHKNGFYSAVATLTLAWVKQDIAQLEPAVAVIS.

The protein belongs to the TorD/DmsD family. TorD subfamily.

The protein localises to the cytoplasm. In terms of biological role, involved in the biogenesis of TorA. Acts on TorA before the insertion of the molybdenum cofactor and, as a result, probably favors a conformation of the apoenzyme that is competent for acquiring the cofactor. This is Chaperone protein TorD from Shewanella baltica (strain OS155 / ATCC BAA-1091).